The sequence spans 926 residues: Peripheral plasma membrane protein CASK (926 aa).

Residues 12–276 form the Protein kinase domain; it reads YELCEVIGKG…VYEALNHPWL (265 aa). ATP-binding positions include 18–26 and K41; that span reads IGKGPFSVV. A Phosphoserine modification is found at S51. The active site involves D141. Phosphoserine; by autocatalysis is present on residues S151 and S155. T182 is subject to Phosphothreonine. Residues K192 and S313 each carry the phosphoserine modification. The interval 305–315 is calmodulin-binding; it reads KGAVLAAVSSH. 2 consecutive L27 domains span residues 343–398 and 402–455; these read AERA…SPQI and PSDA…YSDE. The tract at residues 482–909 is required for interaction with NRXN1 (via C-terminal tail); it reads MENVTRVRLV…DETIRHLEEA (428 aa). A PDZ domain is found at 489-564; that stretch reads RLVQFQKNTD…MLREMRGSIT (76 aa). Phosphoserine occurs at positions 571 and 577. The disordered stretch occupies residues 574–610; sequence QSSSCERDSPSTSRQSPANGHSSTNNSVSDLPSTTQP. Residues 612–682 form the SH3 domain; the sequence is GRQIYVRAQF…PSPELQEWRV (71 aa). In terms of domain architecture, Guanylate kinase-like spans 739 to 911; it reads RKTLVLLGAH…TIRHLEEAVE (173 aa).

It in the N-terminal section; belongs to the protein kinase superfamily. CAMK Ser/Thr protein kinase family. CaMK subfamily. Belongs to the MAGUK family. CASK and LIN7 form two mutually exclusive tripartite complexes with APBA1 or CASKIN1. Component of the brain-specific heterotrimeric complex (LIN-10-LIN-2-LIN-7 complex) composed of at least APBA1, CASK, and LIN7, which associates with the motor protein KIF17 to transport vesicles along microtubules. Forms a heterotrimeric complex with DLG1 and LIN7B via their L27 domains. Identified in a complex with ACTN4, IQGAP1, MAGI2, NPHS1, SPTAN1 and SPTBN1. Part of a complex containing CASK, TBR1 and TSPYL2. Interacts with WHRN. Interacts (via the PDZ, SH3 and guanylate kinase-like domains) with NRXN1 (via C-terminus). Interacts with CASKIN1, APBA1, LIN7(A/B/C) and L27 domain of DLG1 and isoform 2 of DLG4. Interacts with FCHSD2. Interacts with KIRREL3. Interacts with TBR1. Interacts with TSPYL2. Unlike other protein kinases, does not require a divalent cation such as magnesium for catalytic activity. serves as cofactor. In terms of tissue distribution, ubiquitous. Expression is significantly greater in brain relative to kidney, lung, and liver and in fetal brain and kidney relative to lung and liver.

It is found in the nucleus. The protein localises to the cytoplasm. The protein resides in the cell membrane. It carries out the reaction L-seryl-[protein] + ATP = O-phospho-L-seryl-[protein] + ADP + H(+). It catalyses the reaction L-threonyl-[protein] + ATP = O-phospho-L-threonyl-[protein] + ADP + H(+). Differs from archetypal CaMK members in that the kinase domain exhibits a constitutively active conformation and the autoinhibitory region does not engage in direct contact with the ATP-binding cleft, although it still binds Ca(2+)/CAM. In terms of biological role, multidomain scaffolding Mg(2+)-independent protein kinase that catalyzes the phosphotransfer from ATP to proteins such as NRXN1, and plays a role in synaptic transmembrane protein anchoring and ion channel trafficking. Contributes to neural development and regulation of gene expression via interaction with the transcription factor TBR1. Binds to cell-surface proteins, including amyloid precursor protein, neurexins and syndecans. May mediate a link between the extracellular matrix and the actin cytoskeleton via its interaction with syndecan and with the actin/spectrin-binding protein 4.1. Component of the LIN-10-LIN-2-LIN-7 complex, which associates with the motor protein KIF17 to transport vesicles containing N-methyl-D-aspartate (NMDA) receptor subunit NR2B along microtubules. The polypeptide is Peripheral plasma membrane protein CASK (Homo sapiens (Human)).